Reading from the N-terminus, the 159-residue chain is Phosphopantetheine adenylyltransferase (159 aa).

Thr-10 provides a ligand contact to substrate. ATP is bound by residues 10–11 (TF) and His-18. The substrate site is built by Lys-42, Leu-74, and Arg-88. ATP-binding positions include 89–91 (GLR), Glu-99, and 124–130 (NAFISSS).

It belongs to the bacterial CoaD family. As to quaternary structure, homohexamer. The cofactor is Mg(2+).

It is found in the cytoplasm. The enzyme catalyses (R)-4'-phosphopantetheine + ATP + H(+) = 3'-dephospho-CoA + diphosphate. It participates in cofactor biosynthesis; coenzyme A biosynthesis; CoA from (R)-pantothenate: step 4/5. In terms of biological role, reversibly transfers an adenylyl group from ATP to 4'-phosphopantetheine, yielding dephospho-CoA (dPCoA) and pyrophosphate. The protein is Phosphopantetheine adenylyltransferase of Campylobacter fetus subsp. fetus (strain 82-40).